Consider the following 156-residue polypeptide: Ribosomal RNA large subunit methyltransferase H (156 aa).

Residues leucine 73, glycine 104, and 123–128 (ISSMTL) contribute to the S-adenosyl-L-methionine site.

This sequence belongs to the RNA methyltransferase RlmH family. As to quaternary structure, homodimer.

The protein resides in the cytoplasm. It carries out the reaction pseudouridine(1915) in 23S rRNA + S-adenosyl-L-methionine = N(3)-methylpseudouridine(1915) in 23S rRNA + S-adenosyl-L-homocysteine + H(+). Functionally, specifically methylates the pseudouridine at position 1915 (m3Psi1915) in 23S rRNA. This Janthinobacterium sp. (strain Marseille) (Minibacterium massiliensis) protein is Ribosomal RNA large subunit methyltransferase H.